The chain runs to 188 residues: Trafficking protein particle complex subunit 5 (188 aa).

Ser10 bears the Phosphoserine mark.

The protein belongs to the TRAPP small subunits family. BET3 subfamily. As to quaternary structure, component of the multisubunit TRAPP (transport protein particle) complex, which includes at least TRAPPC2, TRAPPC2L, TRAPPC3, TRAPPC3L, TRAPPC4, TRAPPC5, TRAPPC8, TRAPPC9, TRAPPC10, TRAPPC11 and TRAPPC12.

The protein localises to the golgi apparatus. The protein resides in the cis-Golgi network. It is found in the endoplasmic reticulum. In terms of biological role, may play a role in vesicular transport from endoplasmic reticulum to Golgi. The chain is Trafficking protein particle complex subunit 5 (TRAPPC5) from Homo sapiens (Human).